We begin with the raw amino-acid sequence, 398 residues long: Cytochrome b (398 aa).

The helical transmembrane segment at 45–65 (LGSIAGIALVIQIITGVILAM) threads the bilayer. H95 and H109 together coordinate heme b. 9 helical membrane passes run 96–116 (AVGASMFFAAIYLHIARGLYY), 129–149 (IGIIIFLIMMATAFMGYVLPW), 164–184 (FSAIPLVGEPIVIWLWGGFSV), 192–212 (FFALHYLFPFIIVVLVILHLV), 245–265 (FVGFGVYFIIFAYFIFYAPNY), 277–297 (PLVTPAHIVPEWYFLPFYAIL), 304–324 (LGGVFLMFGSIVVLFLLPWLD), 339–359 (IAFWIFMADCLFLGYLGSKPV), and 366–386 (ISRFAVCYYFCHFLLVLPLIG). Residues H196 and H210 each coordinate heme b.

Belongs to the cytochrome b family. As to quaternary structure, the main subunits of complex b-c1 are: cytochrome b, cytochrome c1 and the Rieske protein. Heme b is required as a cofactor.

It localises to the cell membrane. Component of the ubiquinol-cytochrome c reductase complex (complex III or cytochrome b-c1 complex), which is a respiratory chain that generates an electrochemical potential coupled to ATP synthesis. The protein is Cytochrome b (petB) of Rickettsia prowazekii (strain Madrid E).